The chain runs to 71 residues: Small ribosomal subunit protein bS21 (71 aa).

The interval 39 to 71 is disordered; it reads EKPTQERKRKAAAAVKRQLRRSSRDVTKRQRLY. Positions 45 to 59 are enriched in basic residues; the sequence is RKRKAAAAVKRQLRR. Over residues 60–71 the composition is skewed to basic and acidic residues; sequence SSRDVTKRQRLY.

It belongs to the bacterial ribosomal protein bS21 family.

This chain is Small ribosomal subunit protein bS21, found in Stenotrophomonas maltophilia (strain K279a).